Reading from the N-terminus, the 396-residue chain is Putative cytochrome P450 YjiB (396 aa).

Cys-349 serves as a coordination point for heme.

Belongs to the cytochrome P450 family. Heme serves as cofactor.

In Bacillus subtilis (strain 168), this protein is Putative cytochrome P450 YjiB (yjiB).